The primary structure comprises 31 residues: Large ribosomal subunit protein bL21 (31 aa).

The protein belongs to the bacterial ribosomal protein bL21 family. As to quaternary structure, part of the 50S ribosomal subunit. Contacts protein L20.

In terms of biological role, this protein binds to 23S rRNA in the presence of protein L20. The chain is Large ribosomal subunit protein bL21 (rplU) from Streptococcus thermophilus.